The chain runs to 290 residues: 4-hydroxybenzoate octaprenyltransferase (290 aa).

The next 7 membrane-spanning stretches (helical) occupy residues 33–53 (LWAL…AVFV), 99–119 (LFVV…TMTI), 141–161 (LPQV…FAAV), 163–183 (ESVP…AVAY), 213–233 (FIIG…GWLN), 237–257 (WGYY…QKLI), and 268–288 (AFMN…MSYW).

It belongs to the UbiA prenyltransferase family. It depends on Mg(2+) as a cofactor.

It is found in the cell inner membrane. It carries out the reaction all-trans-octaprenyl diphosphate + 4-hydroxybenzoate = 4-hydroxy-3-(all-trans-octaprenyl)benzoate + diphosphate. The protein operates within cofactor biosynthesis; ubiquinone biosynthesis. Catalyzes the prenylation of para-hydroxybenzoate (PHB) with an all-trans polyprenyl group. Mediates the second step in the final reaction sequence of ubiquinone-8 (UQ-8) biosynthesis, which is the condensation of the polyisoprenoid side chain with PHB, generating the first membrane-bound Q intermediate 3-octaprenyl-4-hydroxybenzoate. In Escherichia fergusonii (strain ATCC 35469 / DSM 13698 / CCUG 18766 / IAM 14443 / JCM 21226 / LMG 7866 / NBRC 102419 / NCTC 12128 / CDC 0568-73), this protein is 4-hydroxybenzoate octaprenyltransferase.